The following is a 138-amino-acid chain: Phospholipase A2 homolog crotoxin acid subunit CA (138 aa).

An N-terminal signal peptide occupies residues 1 to 37; the sequence is MRALWIVAVLLVGVEGSLVEFETLMMKIAGRSGISYY. 8 disulfide bridges follow: Cys42/Cys131, Cys44/Cys60, Cys59/Cys111, Cys65/Cys138, Cys66/Cys104, Cys73/Cys97, Cys91/Cys102, and Cys131/Cys138. Positions 79–82 are excised as a propeptide; that stretch reads VYTY. Pyrrolidone carboxylic acid is present on Gln84. A propeptide spanning residues 119-124 is cleaved from the precursor; sequence YDYKYL. The residue at position 125 (Gln125) is a Pyrrolidone carboxylic acid.

Belongs to the phospholipase A2 family. Group II subfamily. D49 sub-subfamily. In terms of assembly, heterodimer of one of the acidic (CA1, CA2, CA3 or CA4) and one of the basic (CBa1, CBa2, CBb, CBc or CBd) subunits; non-covalently linked. The acidic subunit is non-toxic, without enzymatic activity and comprises 3 peptides that are cross-linked by 5 disulfide bridges. The basic subunit is toxic, has phospholipase A2 activity and is composed of a single chain. Multiple variants of each subunit give different crotoxin complexes that can be subdivided into 2 classes: (1) those of high toxicity, low PLA2 activity (CBb, CBc and CBd linked with high affinity to any CA) and high stability (K(d)=4.5 nM) and (2) those of moderate toxicity, high PLA2 activity (CBa2 linked with low affinity to any CA) and low stability (K(d)=25 nM). As to expression, expressed by the venom gland.

It localises to the secreted. In terms of biological role, CAalpha-CAbeta-CAgamma: The acidic subunit of crotoxin (CA) is a heterotrimer of three disulfide-linked chains generated by post-translational maturation of a PLA2-like precursor. CA has no PLA2 activity and is not neurotoxic by itself, but plays several important functions in the crotoxin complex by increasing the lethal potency of the uncomplexed CB subunit. It acts by physically occluding the hydrophobic interfacial binding surface (IBS) of CB. This effect decreases the adsorption of CB to phospholipid membranes, targeting the crotoxin complex to reach the specific presynaptic receptor (R48) at the neuromuscular junction. It also prevents the formation of the reactive CB dimer. Moreover, the CA subunit inhibits the catalytic activity by partially masking the catalytic site of CB and inhibits its anticoagulant activity. Heterodimer CA-CB: Crotoxin is a potent presynaptic neurotoxin that possesses phospholipase A2 (PLA2) activity and exerts a lethal action by blocking neuromuscular transmission. It consists of a non-covalent association of a basic and weakly toxic PLA2 subunit (CBa2, CBb, CBc, or CBd), with a small acidic, non-enzymatic and non-toxic subunit (CA1, CA2, CA3 or CA4). The complex acts by binding to a specific 48-kDa protein (R48/CAPT) receptor located on presynaptic membranes, forming a transient ternary complex CA-CB-R48, followed by dissociation of the CA-CB complex and release of the CA subunit. At equilibrium, only the CB subunits remain associated with the specific crotoxin receptor. In addition to neurotoxicity, crotoxin has been found to exert myotoxicity, nephrotoxicity, and cardiovascular toxicity. Moreover, anti-inflammatory, immunomodulatory, anti-tumor and analgesic effects of crotoxin have also been reported. Its function is as follows. Found in the venom as a monomer and stabilized by one disulfide bond (Cys-131 and Cys-138). This peptide induces potent antinociceptive effects in acute and chronic pain models. This effect is mediated by the release of peripheral dynorphin A, an endogenous agonist of kappa-opioid receptors, and this release is dependent on cannabinoid receptor CB2 activation. The sequence is that of Phospholipase A2 homolog crotoxin acid subunit CA from Crotalus durissus terrificus (South American rattlesnake).